A 1342-amino-acid polypeptide reads, in one-letter code: DNA-directed RNA polymerase subunit beta (1342 aa).

This sequence belongs to the RNA polymerase beta chain family. As to quaternary structure, the RNAP catalytic core consists of 2 alpha, 1 beta, 1 beta' and 1 omega subunit. When a sigma factor is associated with the core the holoenzyme is formed, which can initiate transcription.

It catalyses the reaction RNA(n) + a ribonucleoside 5'-triphosphate = RNA(n+1) + diphosphate. Its function is as follows. DNA-dependent RNA polymerase catalyzes the transcription of DNA into RNA using the four ribonucleoside triphosphates as substrates. This is DNA-directed RNA polymerase subunit beta from Yersinia enterocolitica serotype O:8 / biotype 1B (strain NCTC 13174 / 8081).